Here is an 87-residue protein sequence, read N- to C-terminus: Defensin-A (87 aa).

Positions 1–19 (MKFYLVLAFLTLCAVAVTA) are cleaved as a signal peptide. Positions 20 to 44 (LPAGDETRIDLETLEEDLRLVDGAQ) are excised as a propeptide. Disulfide bonds link Cys-57–Cys-78, Cys-64–Cys-83, and Cys-68–Cys-85.

Hemolymph and fat body.

The protein localises to the secreted. Functionally, antibacterial peptide mostly active against Gram-positive and Gram negative bacteria. The polypeptide is Defensin-A (Glossina morsitans morsitans (Savannah tsetse fly)).